We begin with the raw amino-acid sequence, 132 residues long: Iron-sulfur cluster assembly 1 homolog, mitochondrial (132 aa).

Residues Met1–Ala15 constitute a mitochondrion transit peptide. Residues Cys60, Cys124, and Cys126 each coordinate Fe cation.

This sequence belongs to the HesB/IscA family. Homooligomer, forming a rod-shaped structure 24 nm in length that may arise through a double-helical assembly of subunits. Interacts with CRY4; CRY4 seems to be associated with the outside of the rod-shaped homooligomer. Does not interact with CRY1 or CRY2. Detected in retina, especially in the retinal ganglion layer, the inner nuclear layer and the outer nuclear layer. Detected in retina visual pigment cells (at protein level).

The protein localises to the mitochondrion. Its function is as follows. Involved in the maturation of mitochondrial 4Fe-4S proteins functioning late in the iron-sulfur cluster assembly pathway. Probably involved in the binding of an intermediate of Fe/S cluster assembly. Component of a putative magnetoreceptor complex formed by ISCA1 and CRY4, a member of the cryptochrome family that are known to be required for light-dependent magnetosensitivity in various orgnisms. The rod-like assembly may facilitate the perception of the Earth's weak magnetic field. Both ISCA1 and the complex with CRY4 have magnetic properties and are attracted to iron beads. When exposed to a magnetic field of 1 mT (superior to the natural magnetic field), over 50% of the rod-like complexes align more or less in parallel with the magnetic field at room temperature. The polypeptide is Iron-sulfur cluster assembly 1 homolog, mitochondrial (ISCA1) (Columba livia (Rock dove)).